The following is a 1032-amino-acid chain: Tail tape measure protein gp18 (1032 aa).

Residues 131 to 178 adopt a coiled-coil conformation; that stretch reads GVIKASQDLDKLQAKLDDATDAKERAKIMEQIKNLQASLGKEERKALD.

Its subcellular location is the virion. Functionally, serves as a base for tail tube protein polymerization and acts as a template for tail length determination. The sequence is that of Tail tape measure protein gp18 from Bacillus phage SPP1 (Bacteriophage SPP1).